The following is a 456-amino-acid chain: Bifunctional protein GlmU (456 aa).

A pyrophosphorylase region spans residues 1–230 (MDKRFAVVLA…FQETLGVNDR (230 aa)). UDP-N-acetyl-alpha-D-glucosamine-binding positions include 9 to 12 (LAAG), lysine 23, glutamine 73, and 78 to 79 (GT). Aspartate 103 is a Mg(2+) binding site. Glycine 140, glutamate 155, asparagine 170, and asparagine 228 together coordinate UDP-N-acetyl-alpha-D-glucosamine. Asparagine 228 contributes to the Mg(2+) binding site. Positions 231–251 (VALSQAEQFMKERINKRHMQN) are linker. The tract at residues 252-456 (GVTLIDPMNT…DDYVKNIHKK (205 aa)) is N-acetyltransferase. The UDP-N-acetyl-alpha-D-glucosamine site is built by arginine 333 and lysine 351. Histidine 363 acts as the Proton acceptor in catalysis. 2 residues coordinate UDP-N-acetyl-alpha-D-glucosamine: tyrosine 366 and asparagine 377. Residues 386–387 (NY), alanine 423, and arginine 440 each bind acetyl-CoA.

In the N-terminal section; belongs to the N-acetylglucosamine-1-phosphate uridyltransferase family. The protein in the C-terminal section; belongs to the transferase hexapeptide repeat family. As to quaternary structure, homotrimer. The cofactor is Mg(2+).

It localises to the cytoplasm. It carries out the reaction alpha-D-glucosamine 1-phosphate + acetyl-CoA = N-acetyl-alpha-D-glucosamine 1-phosphate + CoA + H(+). The catalysed reaction is N-acetyl-alpha-D-glucosamine 1-phosphate + UTP + H(+) = UDP-N-acetyl-alpha-D-glucosamine + diphosphate. Its pathway is nucleotide-sugar biosynthesis; UDP-N-acetyl-alpha-D-glucosamine biosynthesis; N-acetyl-alpha-D-glucosamine 1-phosphate from alpha-D-glucosamine 6-phosphate (route II): step 2/2. It functions in the pathway nucleotide-sugar biosynthesis; UDP-N-acetyl-alpha-D-glucosamine biosynthesis; UDP-N-acetyl-alpha-D-glucosamine from N-acetyl-alpha-D-glucosamine 1-phosphate: step 1/1. It participates in bacterial outer membrane biogenesis; LPS lipid A biosynthesis. Catalyzes the last two sequential reactions in the de novo biosynthetic pathway for UDP-N-acetylglucosamine (UDP-GlcNAc). The C-terminal domain catalyzes the transfer of acetyl group from acetyl coenzyme A to glucosamine-1-phosphate (GlcN-1-P) to produce N-acetylglucosamine-1-phosphate (GlcNAc-1-P), which is converted into UDP-GlcNAc by the transfer of uridine 5-monophosphate (from uridine 5-triphosphate), a reaction catalyzed by the N-terminal domain. This is Bifunctional protein GlmU from Bacillus subtilis (strain 168).